Here is a 429-residue protein sequence, read N- to C-terminus: Phosphoribosylamine--glycine ligase (429 aa).

The 208-residue stretch at 109–316 (KDFLARHQIP…LVDLCLAACD (208 aa)) folds into the ATP-grasp domain. An ATP-binding site is contributed by 135–196 (LREKGAPIVI…EEFLDGEEAS (62 aa)). Residues Glu-286 and Asn-288 each contribute to the Mg(2+) site.

Belongs to the GARS family. As to quaternary structure, monomer. Requires Mg(2+) as cofactor. It depends on Mn(2+) as a cofactor.

It carries out the reaction 5-phospho-beta-D-ribosylamine + glycine + ATP = N(1)-(5-phospho-beta-D-ribosyl)glycinamide + ADP + phosphate + H(+). Its pathway is purine metabolism; IMP biosynthesis via de novo pathway; N(1)-(5-phospho-D-ribosyl)glycinamide from 5-phospho-alpha-D-ribose 1-diphosphate: step 2/2. The chain is Phosphoribosylamine--glycine ligase from Salmonella typhi.